Reading from the N-terminus, the 267-residue chain is MAAIVWKGFISFGLVSFPVRLNAAARPETIHFHMLHKKDESRVKEVWYCADENKPIDRAEIVKGYEVRKGEYVVIEDEDLKKIAPPTATTMDILQFVKSDQVDPIYFESSYYVGAEEGGGKAYALFVAALDATKEDAIAKLSMHNREHIVLIRASDNALVLHTLYYPNELHKANRSETPKTKYTAKELELAQSLVSQLTAPFKPQEFHDEYRENVEHLIEQKRKGGKITAVKQPRKAPVIDLMEALKRSVKAAESKRKKPAGKRKAA.

The Ku domain maps to 10 to 190 (ISFGLVSFPV…TKYTAKELEL (181 aa)).

It belongs to the prokaryotic Ku family. In terms of assembly, homodimer. Interacts with LigD.

In terms of biological role, with LigD forms a non-homologous end joining (NHEJ) DNA repair enzyme, which repairs dsDNA breaks with reduced fidelity. Binds linear dsDNA with 5'- and 3'- overhangs but not closed circular dsDNA nor ssDNA. Recruits and stimulates the ligase activity of LigD. The protein is Non-homologous end joining protein Ku of Solibacter usitatus (strain Ellin6076).